Reading from the N-terminus, the 968-residue chain is Ribonuclease E (968 aa).

Positions 39–119 (SNIYKGKITR…GTKGAALTTF (81 aa)) constitute an S1 motif domain. Positions 303 and 346 each coordinate Mg(2+). The Zn(2+) site is built by cysteine 404 and cysteine 407. The interval 404 to 407 (CPRC) is required for zinc-mediated homotetramerization and catalytic activity. The interval 947–968 (IKNSAGAHSATNFSTSPVKKSE) is disordered. Positions 955–968 (SATNFSTSPVKKSE) are enriched in polar residues.

Belongs to the RNase E/G family. RNase E subfamily. Component of the RNA degradosome, which is a multiprotein complex involved in RNA processing and mRNA degradation. Within the RNA degradosome, RNase E assembles into a homotetramer formed by a dimer of dimers. Requires Zn(2+) as cofactor. The cofactor is Mg(2+).

It localises to the cytoplasm. Its subcellular location is the cell inner membrane. It carries out the reaction Endonucleolytic cleavage of single-stranded RNA in A- and U-rich regions.. Endoribonuclease that plays a central role in RNA processing and decay. Required for the maturation of 5S and 16S rRNAs and the majority of tRNAs. Also involved in the degradation of most mRNAs. This is Ribonuclease E from Buchnera aphidicola subsp. Schizaphis graminum (strain Sg).